The chain runs to 107 residues: Nucleoid-associated protein GOX0603 (107 aa).

This sequence belongs to the YbaB/EbfC family. As to quaternary structure, homodimer.

It is found in the cytoplasm. It localises to the nucleoid. Its function is as follows. Binds to DNA and alters its conformation. May be involved in regulation of gene expression, nucleoid organization and DNA protection. This chain is Nucleoid-associated protein GOX0603, found in Gluconobacter oxydans (strain 621H) (Gluconobacter suboxydans).